The primary structure comprises 241 residues: Small ribosomal subunit protein uS2 (241 aa).

The protein belongs to the universal ribosomal protein uS2 family.

This chain is Small ribosomal subunit protein uS2, found in Yersinia pestis bv. Antiqua (strain Antiqua).